The sequence spans 88 residues: Large ribosomal subunit protein bL31B (88 aa).

Belongs to the bacterial ribosomal protein bL31 family. Type B subfamily. In terms of assembly, part of the 50S ribosomal subunit.

The chain is Large ribosomal subunit protein bL31B from Nocardia farcinica (strain IFM 10152).